The primary structure comprises 309 residues: MNRILSVSFYLFFLYLYIYKTYGKVKNTDQEISNIYGTNYYLRNGFLNGKNGKGNKYEDLQEEGEGENDDEEHSNSEESDNDEENEIIVGQDEAPKSDEAEALKSDEAEALKSDEAEARKSDEAEALKSDEAEARKSDEAEALKSDEAEALKSDEAEARKSDEAEALKSDEAEALKSDEAEARKSDEAEARKSDEAEARKSDEAEARKSDEAEALKSDEAEARKSDEAEARKSDEAEALKSDEAEARKSDEAEARKSEAGTEGPKGTGGPGSEAGTEGPKGTGGPGSGGEHSHNKKKSKKSIMNMLILM.

Positions 1-23 (MNRILSVSFYLFFLYLYIYKTYG) are cleaved as a signal peptide. Residues 52 to 309 (GKGNKYEDLQ…KSIMNMLILM (258 aa)) form a disordered region. A compositionally biased stretch (acidic residues) spans 60–86 (LQEEGEGENDDEEHSNSEESDNDEENE). The segment covering 93–259 (EAPKSDEAEA…DEAEARKSEA (167 aa)) has biased composition (basic and acidic residues). Positions 97–256 (SDEAEALKSD…RKSDEAEARK (160 aa)) are 20 X 8 AA approximate tandem repeats of A-[RL]-K-S-D-E-A-E. 2 tandem repeats follow at residues 257 to 271 (SEAGTEGPKGTGGPG) and 272 to 286 (SEAGTEGPKGTGGPG). A 2 X 15 AA tandem repeats of S-E-A-G-T-E-G-P-K-G-T-G-G-P-G region spans residues 257-286 (SEAGTEGPKGTGGPGSEAGTEGPKGTGGPG). The segment covering 263-289 (GPKGTGGPGSEAGTEGPKGTGGPGSGG) has biased composition (gly residues).

The protein localises to the parasitophorous vacuole. Its function is as follows. S antigens are soluble heat-stable proteins present in the sera of some infected individuals. The sequence is that of S-antigen protein from Plasmodium falciparum (isolate NF7 / Ghana).